The chain runs to 355 residues: Tetraacyldisaccharide 4'-kinase (355 aa).

Residue 49–56 (SAGGTGKT) participates in ATP binding.

This sequence belongs to the LpxK family.

The catalysed reaction is a lipid A disaccharide + ATP = a lipid IVA + ADP + H(+). It functions in the pathway glycolipid biosynthesis; lipid IV(A) biosynthesis; lipid IV(A) from (3R)-3-hydroxytetradecanoyl-[acyl-carrier-protein] and UDP-N-acetyl-alpha-D-glucosamine: step 6/6. Functionally, transfers the gamma-phosphate of ATP to the 4'-position of a tetraacyldisaccharide 1-phosphate intermediate (termed DS-1-P) to form tetraacyldisaccharide 1,4'-bis-phosphate (lipid IVA). This chain is Tetraacyldisaccharide 4'-kinase, found in Chlorobium phaeobacteroides (strain DSM 266 / SMG 266 / 2430).